The chain runs to 386 residues: MNDQPETGITPGGTSGAFRDVLSKDHARRGKPPLHFADMSEEERIGKAKELGLPKFRVKQLANHYYGHFDVNAEEFSDFPAARRSDAAEAFFPELIHEVTRQVADGGTTIKTLWRLFDGSLIESVLMRYPTRTTLCISSQVGCGMGCPFCATGQLGLTRNMSAGEIVEQVRVAAKAMRDGEVAGGSGRLSNIVFMGMGEPMGNYKSVLSAVRQISSMPPEGFGISARNITVSTVGVVPGIRKLAEEGIPVRLAVSLHAPSDELRDELVPMNKRFNTKQVLDAAHDYYLASKRRVSIEYALMRGINDQAEHAKLLAKRLNHYGDDWAHVNPIPLNPIEGSKWTASKPEDERRFLEILHNAGITATLRDTRGQDIDGACGQLAAKERD.

Glu-123 (proton acceptor) is an active-site residue. The Radical SAM core domain maps to 129-372 (YPTRTTLCIS…ATLRDTRGQD (244 aa)). A disulfide bridge links Cys-136 with Cys-377. [4Fe-4S] cluster is bound by residues Cys-143, Cys-147, and Cys-150. S-adenosyl-L-methionine is bound by residues 198–199 (GE), Ser-232, 255–257 (SLH), and Asn-334. The S-methylcysteine intermediate role is filled by Cys-377.

This sequence belongs to the radical SAM superfamily. RlmN family. Requires [4Fe-4S] cluster as cofactor.

The protein resides in the cytoplasm. The enzyme catalyses adenosine(2503) in 23S rRNA + 2 reduced [2Fe-2S]-[ferredoxin] + 2 S-adenosyl-L-methionine = 2-methyladenosine(2503) in 23S rRNA + 5'-deoxyadenosine + L-methionine + 2 oxidized [2Fe-2S]-[ferredoxin] + S-adenosyl-L-homocysteine. It carries out the reaction adenosine(37) in tRNA + 2 reduced [2Fe-2S]-[ferredoxin] + 2 S-adenosyl-L-methionine = 2-methyladenosine(37) in tRNA + 5'-deoxyadenosine + L-methionine + 2 oxidized [2Fe-2S]-[ferredoxin] + S-adenosyl-L-homocysteine. Its function is as follows. Specifically methylates position 2 of adenine 2503 in 23S rRNA and position 2 of adenine 37 in tRNAs. In Bifidobacterium adolescentis (strain ATCC 15703 / DSM 20083 / NCTC 11814 / E194a), this protein is Probable dual-specificity RNA methyltransferase RlmN.